Here is a 92-residue protein sequence, read N- to C-terminus: Small ribosomal subunit protein uS19 (92 aa).

It belongs to the universal ribosomal protein uS19 family.

Protein S19 forms a complex with S13 that binds strongly to the 16S ribosomal RNA. This Borrelia recurrentis (strain A1) protein is Small ribosomal subunit protein uS19.